The sequence spans 317 residues: L-lactate dehydrogenase 1 (317 aa).

NAD(+)-binding positions include V17, D38, K43, Y69, and 83-84 (GA). Q86 and R92 together coordinate substrate. Residues S105, 122 to 124 (ATN), and S147 each bind NAD(+). 124 to 127 (NPVD) is a binding site for substrate. 152–155 (DSAR) lines the substrate pocket. H179 (proton acceptor) is an active-site residue. Y223 is modified (phosphotyrosine). T232 contacts substrate.

The protein belongs to the LDH/MDH superfamily. LDH family. In terms of assembly, homotetramer.

Its subcellular location is the cytoplasm. The enzyme catalyses (S)-lactate + NAD(+) = pyruvate + NADH + H(+). The protein operates within fermentation; pyruvate fermentation to lactate; (S)-lactate from pyruvate: step 1/1. Catalyzes the conversion of lactate to pyruvate (Potential). Appears to be the primary factor that allows S.aureus growth during nitrosative stress in both aerobically and anaerobically cultured cells. This chain is L-lactate dehydrogenase 1, found in Staphylococcus aureus (strain JH1).